Here is an 861-residue protein sequence, read N- to C-terminus: Bifunctional uridylyltransferase/uridylyl-removing enzyme (861 aa).

The uridylyltransferase stretch occupies residues 1–321 (MKNDNRIIKN…VYHQKQKIIR (321 aa)). Residues 322–678 (LDDEFQLSNR…IMPHHSQGGT (357 aa)) form a uridylyl-removing region. Residues 440 to 562 (VDQHTLFVIR…LPHARYLDYL (123 aa)) enclose the HD domain. ACT domains are found at residues 679–760 (EVFI…AVSR) and 788–861 (QLFL…KSKY).

Belongs to the GlnD family. Mg(2+) is required as a cofactor.

The catalysed reaction is [protein-PII]-L-tyrosine + UTP = [protein-PII]-uridylyl-L-tyrosine + diphosphate. It catalyses the reaction [protein-PII]-uridylyl-L-tyrosine + H2O = [protein-PII]-L-tyrosine + UMP + H(+). Uridylyltransferase (UTase) activity is inhibited by glutamine, while glutamine activates uridylyl-removing (UR) activity. Modifies, by uridylylation and deuridylylation, the PII regulatory proteins (GlnB and homologs), in response to the nitrogen status of the cell that GlnD senses through the glutamine level. Under low glutamine levels, catalyzes the conversion of the PII proteins and UTP to PII-UMP and PPi, while under higher glutamine levels, GlnD hydrolyzes PII-UMP to PII and UMP (deuridylylation). Thus, controls uridylylation state and activity of the PII proteins, and plays an important role in the regulation of nitrogen assimilation and metabolism. The protein is Bifunctional uridylyltransferase/uridylyl-removing enzyme of Legionella pneumophila subsp. pneumophila (strain Philadelphia 1 / ATCC 33152 / DSM 7513).